A 195-amino-acid chain; its full sequence is ATP-dependent Clp protease proteolytic subunit (195 aa).

Residue Ser98 is the Nucleophile of the active site. His123 is a catalytic residue.

This sequence belongs to the peptidase S14 family. As to quaternary structure, fourteen ClpP subunits assemble into 2 heptameric rings which stack back to back to give a disk-like structure with a central cavity, resembling the structure of eukaryotic proteasomes.

It is found in the cytoplasm. It catalyses the reaction Hydrolysis of proteins to small peptides in the presence of ATP and magnesium. alpha-casein is the usual test substrate. In the absence of ATP, only oligopeptides shorter than five residues are hydrolyzed (such as succinyl-Leu-Tyr-|-NHMec, and Leu-Tyr-Leu-|-Tyr-Trp, in which cleavage of the -Tyr-|-Leu- and -Tyr-|-Trp bonds also occurs).. In terms of biological role, cleaves peptides in various proteins in a process that requires ATP hydrolysis. Has a chymotrypsin-like activity. Plays a major role in the degradation of misfolded proteins. This Caldanaerobacter subterraneus subsp. tengcongensis (strain DSM 15242 / JCM 11007 / NBRC 100824 / MB4) (Thermoanaerobacter tengcongensis) protein is ATP-dependent Clp protease proteolytic subunit.